A 63-amino-acid polypeptide reads, in one-letter code: uncharacterized protein (63 aa).

Positions 1–21 (MNRALILTFVLFFALFAISSA) are cleaved as a signal peptide.

This is an uncharacterized protein from Dictyostelium discoideum (Social amoeba).